The following is a 744-amino-acid chain: Photosystem I P700 chlorophyll a apoprotein A2 (744 aa).

8 helical membrane-spanning segments follow: residues L48–A71, L137–Q160, L177–I201, M275–Y293, L337–Y360, A376–V402, A424–H446, and F527–V545. 2 residues coordinate [4Fe-4S] cluster: C569 and C578. The next 2 helical transmembrane spans lie at A585–W606 and L653–I675. The chlorophyll a site is built by H664, M672, and Y680. W681 serves as a coordination point for phylloquinone. A helical transmembrane segment spans residues L717–A737.

It belongs to the PsaA/PsaB family. The PsaA/B heterodimer binds the P700 chlorophyll special pair and subsequent electron acceptors. PSI consists of a core antenna complex that captures photons, and an electron transfer chain that converts photonic excitation into a charge separation. The cyanobacterial PSI reaction center is composed of one copy each of PsaA,B,C,D,E,F,I,J,K,L,M and X, and forms trimeric complexes. Requires PSI electron transfer chain: 5 chlorophyll a, 1 chlorophyll a', 2 phylloquinones and 3 4Fe-4S clusters. PSI core antenna: 90 chlorophyll a, 22 carotenoids, 3 phospholipids and 1 galactolipid. P700 is a chlorophyll a/chlorophyll a' dimer, A0 is one or more chlorophyll a, A1 is one or both phylloquinones and FX is a shared 4Fe-4S iron-sulfur center. as cofactor.

It localises to the cellular thylakoid membrane. It catalyses the reaction reduced [plastocyanin] + hnu + oxidized [2Fe-2S]-[ferredoxin] = oxidized [plastocyanin] + reduced [2Fe-2S]-[ferredoxin]. Functionally, psaA and PsaB bind P700, the primary electron donor of photosystem I (PSI), as well as the electron acceptors A0, A1 and FX. PSI is a plastocyanin/cytochrome c6-ferredoxin oxidoreductase, converting photonic excitation into a charge separation, which transfers an electron from the donor P700 chlorophyll pair to the spectroscopically characterized acceptors A0, A1, FX, FA and FB in turn. Oxidized P700 is reduced on the lumenal side of the thylakoid membrane by plastocyanin or cytochrome c6. The polypeptide is Photosystem I P700 chlorophyll a apoprotein A2 (Synechococcus sp. (strain JA-2-3B'a(2-13)) (Cyanobacteria bacterium Yellowstone B-Prime)).